The primary structure comprises 711 residues: Double-stranded RNA-specific editase 1 (711 aa).

Residues Met-1 to Leu-78 form a disordered region. The segment covering Ser-63–Thr-73 has biased composition (basic residues). The region spanning Leu-78–Gln-144 is the DRBM 1 domain. Interaction with substrate RNA regions lie at residues Leu-83 to Glu-88 and Val-104 to His-105. The residue at position 149 (Ser-149) is a Phosphoserine. The segment at Leu-176–Pro-220 is disordered. A compositionally biased stretch (low complexity) spans Val-192–Val-213. Residues Pro-231–Asn-298 enclose the DRBM 2 domain. Interaction with substrate RNA stretches follow at residues Val-237–Glu-242 and His-259. Positions Ser-370–Phe-707 constitute an A to I editase domain. Residue His-394 participates in Zn(2+) binding. Glu-396 acts as the Proton donor in catalysis. 1D-myo-inositol hexakisphosphate contacts are provided by Arg-400 and Arg-401. Zn(2+)-binding residues include Cys-451 and Cys-526. 1D-myo-inositol hexakisphosphate-binding residues include Lys-529, Arg-532, Lys-639, Lys-672, Lys-682, and Lys-700.

As to quaternary structure, homodimer. Homodimerization is essential for its catalytic activity. Can form heterodimers with isoform 5 of ADAR/ADAR1. 1D-myo-inositol hexakisphosphate serves as cofactor.

The protein localises to the nucleus. It localises to the nucleolus. It catalyses the reaction adenosine in double-stranded RNA + H2O + H(+) = inosine in double-stranded RNA + NH4(+). Functionally, catalyzes the hydrolytic deamination of adenosine to inosine in double-stranded RNA (dsRNA) referred to as A-to-I RNA editing. This may affect gene expression and function in a number of ways that include mRNA translation by changing codons and hence the amino acid sequence of proteins; pre-mRNA splicing by altering splice site recognition sequences; RNA stability by changing sequences involved in nuclease recognition; genetic stability in the case of RNA virus genomes by changing sequences during viral RNA replication; and RNA structure-dependent activities such as microRNA production or targeting or protein-RNA interactions. Can edit both viral and cellular RNAs and can edit RNAs at multiple sites (hyper-editing) or at specific sites (site-specific editing). Its cellular RNA substrates include: bladder cancer-associated protein (BLCAP), neurotransmitter receptors for glutamate (GRIA2 and GRIK2) and serotonin (HTR2C), GABA receptor (GABRA3) and potassium voltage-gated channel (KCNA1). Site-specific RNA editing of transcripts encoding these proteins results in amino acid substitutions which consequently alter their functional activities. Edits GRIA2 at both the Q/R and R/G sites efficiently but converts the adenosine in hotspot1 much less efficiently. Can inhibit cell proliferation and migration and can stimulate exocytosis. The polypeptide is Double-stranded RNA-specific editase 1 (Adarb1) (Mus musculus (Mouse)).